Consider the following 557-residue polypeptide: Dihydroxy-acid dehydratase (557 aa).

Cys50 contributes to the [2Fe-2S] cluster binding site. Asp82 is a binding site for Mg(2+). Cys123 provides a ligand contact to [2Fe-2S] cluster. The Mg(2+) site is built by Asp124 and Lys125. Lys125 is subject to N6-carboxylysine. Cys195 contacts [2Fe-2S] cluster. Glu447 contacts Mg(2+). Residue Ser473 is the Proton acceptor of the active site.

Belongs to the IlvD/Edd family. In terms of assembly, homodimer. [2Fe-2S] cluster is required as a cofactor. Mg(2+) serves as cofactor.

The enzyme catalyses (2R)-2,3-dihydroxy-3-methylbutanoate = 3-methyl-2-oxobutanoate + H2O. It catalyses the reaction (2R,3R)-2,3-dihydroxy-3-methylpentanoate = (S)-3-methyl-2-oxopentanoate + H2O. It participates in amino-acid biosynthesis; L-isoleucine biosynthesis; L-isoleucine from 2-oxobutanoate: step 3/4. Its pathway is amino-acid biosynthesis; L-valine biosynthesis; L-valine from pyruvate: step 3/4. Its function is as follows. Functions in the biosynthesis of branched-chain amino acids. Catalyzes the dehydration of (2R,3R)-2,3-dihydroxy-3-methylpentanoate (2,3-dihydroxy-3-methylvalerate) into 2-oxo-3-methylpentanoate (2-oxo-3-methylvalerate) and of (2R)-2,3-dihydroxy-3-methylbutanoate (2,3-dihydroxyisovalerate) into 2-oxo-3-methylbutanoate (2-oxoisovalerate), the penultimate precursor to L-isoleucine and L-valine, respectively. The protein is Dihydroxy-acid dehydratase of Metallosphaera sedula (strain ATCC 51363 / DSM 5348 / JCM 9185 / NBRC 15509 / TH2).